The sequence spans 350 residues: Anthranilate phosphoribosyltransferase (350 aa).

5-phospho-alpha-D-ribose 1-diphosphate-binding positions include Gly94, 97 to 98 (GD), Thr102, 104 to 107 (NIST), 122 to 130 (KHGNRAVSS), and Ser134. Gly94 contacts anthranilate. Ser106 is a binding site for Mg(2+). Asn125 provides a ligand contact to anthranilate. Residue Arg180 participates in anthranilate binding. The Mg(2+) site is built by Asp239 and Glu240.

This sequence belongs to the anthranilate phosphoribosyltransferase family. In terms of assembly, homodimer. Requires Mg(2+) as cofactor.

The catalysed reaction is N-(5-phospho-beta-D-ribosyl)anthranilate + diphosphate = 5-phospho-alpha-D-ribose 1-diphosphate + anthranilate. The protein operates within amino-acid biosynthesis; L-tryptophan biosynthesis; L-tryptophan from chorismate: step 2/5. Functionally, catalyzes the transfer of the phosphoribosyl group of 5-phosphorylribose-1-pyrophosphate (PRPP) to anthranilate to yield N-(5'-phosphoribosyl)-anthranilate (PRA). The polypeptide is Anthranilate phosphoribosyltransferase (Geobacter sulfurreducens (strain ATCC 51573 / DSM 12127 / PCA)).